The sequence spans 138 residues: Putative membrane protein insertion efficiency factor (138 aa).

The disordered stretch occupies residues 71 to 138 (YDPVPGTPEA…GTPSHTRGEN (68 aa)). Residues 81–113 (RQWRELHPETARSKNEPIHDLTDDNPRDHEPAL) are compositionally biased toward basic and acidic residues. Polar residues predominate over residues 123-138 (PGSTHTGTPSHTRGEN).

It belongs to the UPF0161 family.

It is found in the cell membrane. Could be involved in insertion of integral membrane proteins into the membrane. This Cutibacterium acnes (strain DSM 16379 / KPA171202) (Propionibacterium acnes) protein is Putative membrane protein insertion efficiency factor.